The primary structure comprises 358 residues: Peptide chain release factor 2 (358 aa).

Q242 carries the N5-methylglutamine modification.

The protein belongs to the prokaryotic/mitochondrial release factor family. In terms of processing, methylated by PrmC. Methylation increases the termination efficiency of RF2.

Its subcellular location is the cytoplasm. Functionally, peptide chain release factor 2 directs the termination of translation in response to the peptide chain termination codons UGA and UAA. This Borreliella burgdorferi (strain ATCC 35210 / DSM 4680 / CIP 102532 / B31) (Borrelia burgdorferi) protein is Peptide chain release factor 2 (prfB).